The following is a 458-amino-acid chain: RuvB-like helicase 1 (458 aa).

Residues 1 to 18 (MVQITEVKENQSSRESRT) are compositionally biased toward basic and acidic residues. The interval 1–20 (MVQITEVKENQSSRESRTAA) is disordered. 73–80 (GPPATGKT) is an ATP binding site.

Belongs to the RuvB family. As to quaternary structure, may form heterododecamers with RVB2. Component of the SWR1 chromatin remodeling complex, the INO80 chromatin remodeling complex, and of the R2TP complex.

The protein localises to the nucleus. It catalyses the reaction ATP + H2O = ADP + phosphate + H(+). Its function is as follows. DNA helicase which participates in several chromatin remodeling complexes, including the SWR1 and the INO80 complexes. The SWR1 complex mediates the ATP-dependent exchange of histone H2A for the H2A variant HZT1 leading to transcriptional regulation of selected genes by chromatin remodeling. The INO80 complex remodels chromatin by shifting nucleosomes and is involved in DNA repair. Also involved in pre-rRNA processing. In Candida albicans (strain SC5314 / ATCC MYA-2876) (Yeast), this protein is RuvB-like helicase 1 (RVB1).